Reading from the N-terminus, the 446-residue chain is Glutamine synthetase (446 aa).

The 88-residue stretch at 15–102 (RDIRFVRLWF…MFCDITMPDG (88 aa)) folds into the GS beta-grasp domain. Positions 109 to 446 (SRHVLRRQLA…PYELKNYLSL (338 aa)) constitute a GS catalytic domain. Glu132 and Glu134 together coordinate Mg(2+). Glu184 contacts ATP. Mg(2+)-binding residues include Glu189 and Glu196. Residue Gly241 coordinates L-glutamate. Residue His245 coordinates Mg(2+). ATP is bound by residues 247-249 (HMS) and Ser249. Positions 298, 304, and 316 each coordinate L-glutamate. ATP-binding residues include Arg316 and Arg321. A Mg(2+)-binding site is contributed by Glu336. Arg338 lines the L-glutamate pocket. Residue Lys363 forms an Isoglutamyl lysine isopeptide (Lys-Gln) (interchain with Q-Cter in protein Pup) linkage.

It belongs to the glutamine synthetase family. Oligomer of 12 subunits arranged in the form of two hexagons. In its feedback-inhibited form, interacts with TnrA in order to block its DNA-binding activity. Mg(2+) serves as cofactor.

The protein resides in the cytoplasm. The enzyme catalyses L-glutamate + NH4(+) + ATP = L-glutamine + ADP + phosphate + H(+). Inhibited by glutamine. In terms of biological role, glutamine synthetase (GS) is an unusual multitasking protein that functions as an enzyme, a transcription coregulator, and a chaperone in ammonium assimilation and in the regulation of genes involved in nitrogen metabolism. It catalyzes the ATP-dependent biosynthesis of glutamine from glutamate and ammonia. Feedback-inhibited GlnA also interacts with and regulates the activity of the transcriptional regulator TnrA. During nitrogen limitation, TnrA is in its DNA-binding active state and turns on the transcription of genes required for nitrogen assimilation. Under conditions of nitrogen excess, feedback-inhibited GlnA forms a stable complex with TnrA, which inhibits its DNA-binding activity. In contrast, feedback-inhibited GlnA acts as a chaperone to stabilize the DNA-binding activity of GlnR, which represses the transcription of nitrogen assimilation genes. This Mycolicibacterium smegmatis (strain ATCC 700084 / mc(2)155) (Mycobacterium smegmatis) protein is Glutamine synthetase.